The following is a 398-amino-acid chain: Succinate--CoA ligase [ADP-forming] subunit beta (398 aa).

Residues 9–254 (KALLKSYGAP…TTEEDDKEIE (246 aa)) enclose the ATP-grasp domain. ATP-binding positions include lysine 46, 53–55 (GRG), glutamate 109, alanine 112, and glutamate 117. Positions 209 and 223 each coordinate Mg(2+). Substrate contacts are provided by residues asparagine 274 and 331–333 (GIM).

Belongs to the succinate/malate CoA ligase beta subunit family. In terms of assembly, heterotetramer of two alpha and two beta subunits. The cofactor is Mg(2+).

The enzyme catalyses succinate + ATP + CoA = succinyl-CoA + ADP + phosphate. It catalyses the reaction GTP + succinate + CoA = succinyl-CoA + GDP + phosphate. It functions in the pathway carbohydrate metabolism; tricarboxylic acid cycle; succinate from succinyl-CoA (ligase route): step 1/1. Its function is as follows. Succinyl-CoA synthetase functions in the citric acid cycle (TCA), coupling the hydrolysis of succinyl-CoA to the synthesis of either ATP or GTP and thus represents the only step of substrate-level phosphorylation in the TCA. The beta subunit provides nucleotide specificity of the enzyme and binds the substrate succinate, while the binding sites for coenzyme A and phosphate are found in the alpha subunit. This Rhizobium meliloti (strain 1021) (Ensifer meliloti) protein is Succinate--CoA ligase [ADP-forming] subunit beta.